Here is a 278-residue protein sequence, read N- to C-terminus: Ribosomal RNA small subunit methyltransferase A (278 aa).

S-adenosyl-L-methionine contacts are provided by N27, L29, G54, E75, D101, and N122.

The protein belongs to the class I-like SAM-binding methyltransferase superfamily. rRNA adenine N(6)-methyltransferase family. RsmA subfamily.

Its subcellular location is the cytoplasm. The catalysed reaction is adenosine(1518)/adenosine(1519) in 16S rRNA + 4 S-adenosyl-L-methionine = N(6)-dimethyladenosine(1518)/N(6)-dimethyladenosine(1519) in 16S rRNA + 4 S-adenosyl-L-homocysteine + 4 H(+). In terms of biological role, specifically dimethylates two adjacent adenosines (A1518 and A1519) in the loop of a conserved hairpin near the 3'-end of 16S rRNA in the 30S particle. May play a critical role in biogenesis of 30S subunits. This Brucella anthropi (strain ATCC 49188 / DSM 6882 / CCUG 24695 / JCM 21032 / LMG 3331 / NBRC 15819 / NCTC 12168 / Alc 37) (Ochrobactrum anthropi) protein is Ribosomal RNA small subunit methyltransferase A.